We begin with the raw amino-acid sequence, 273 residues long: Bis(5'-nucleosyl)-tetraphosphatase, symmetrical (273 aa).

The protein belongs to the Ap4A hydrolase family.

It carries out the reaction P(1),P(4)-bis(5'-adenosyl) tetraphosphate + H2O = 2 ADP + 2 H(+). Its function is as follows. Hydrolyzes diadenosine 5',5'''-P1,P4-tetraphosphate to yield ADP. The protein is Bis(5'-nucleosyl)-tetraphosphatase, symmetrical of Aromatoleum aromaticum (strain DSM 19018 / LMG 30748 / EbN1) (Azoarcus sp. (strain EbN1)).